The chain runs to 134 residues: T-cell receptor beta chain V region CTL-F3 (134 aa).

An N-terminal signal peptide occupies residues 1–19 (MAPRLLFCLVLCFLRAEPT). The segment at 20 to 115 (NAGVIQTPRH…SAVYLCASSL (96 aa)) is v segment. A disulfide bond links Cys42 and Cys111. An N-linked (GlcNAc...) asparagine glycan is attached at Asn90. Residues 116–119 (STGV) form a d segment region. The j segment stretch occupies residues 120-134 (SYEQYFGPGTRLTVL).

This is T-cell receptor beta chain V region CTL-F3 from Mus musculus (Mouse).